Reading from the N-terminus, the 153-residue chain is ORM1-like protein 2 (153 aa).

The Cytoplasmic portion of the chain corresponds to 1–21; it reads MNVGVAHSEVNPNTRVMSSRG. The next 2 membrane-spanning stretches (helical) occupy residues 22 to 42 and 43 to 63; these read IWLA…SIPF and FSIP…MYLL. Residues 64 to 105 lie on the Cytoplasmic side of the membrane; that stretch reads LHTVKGTPFETPDQGKDRLLTHWEQIDYGMQCTSSRKFLSIS. A helical membrane pass occupies residues 106–126; that stretch reads PVVLYLLTSFYIKYDPAHFMI. Residues 127 to 153 lie on the Extracellular side of the membrane; the sequence is NTASLLSVLLPKLPQFHGVRVFGINKY.

It belongs to the ORM family. Ceramide-sensitive subunit of the serine palmitoyltransferase (SPT) complex, which is also composed of SPTLC1, SPTLC2/3 and SPTSSA/B.

The protein resides in the endoplasmic reticulum membrane. Functionally, plays an essential role in the homeostatic regulation of sphingolipid de novo biosynthesis by modulating the activity of the serine palmitoyltransferase (SPT) in response to ceramide levels. When complexed to SPT, the binding of ceramides to its N-terminus stabilizes a conformation that block SPT substrate entry, hence preventing SPT catalytic activity. Through this mechanism, maintains ceramide levels at sufficient concentrations for the production of complex sphingolipids, but which prevents the accumulation of ceramides to levels that trigger apoptosis. The sequence is that of ORM1-like protein 2 (ORMDL2) from Gallus gallus (Chicken).